Here is a 54-residue protein sequence, read N- to C-terminus: 2-aminomuconate deaminase (54 aa).

As to quaternary structure, homohexamer.

It catalyses the reaction (2Z,4E)-2-aminomuconate + H2O = (3E)-2-oxohex-3-enedioate + NH4(+). The protein operates within xenobiotic degradation; nitrobenzene degradation. Its function is as follows. Converts 2-aminomuconate to 4-oxalocrotonate, an intermediate step in the biodegradation of nitrobenzene. The chain is 2-aminomuconate deaminase from Ectopseudomonas oleovorans (Pseudomonas oleovorans).